The primary structure comprises 126 residues: Glycine cleavage system H protein (126 aa).

The Lipoyl-binding domain occupies 24 to 105 (TLTVGITDHA…AYGVWLFKIK (82 aa)). Lys-65 carries the N6-lipoyllysine modification.

Belongs to the GcvH family. As to quaternary structure, the glycine cleavage system is composed of four proteins: P, T, L and H. The cofactor is (R)-lipoate.

Functionally, the glycine cleavage system catalyzes the degradation of glycine. The H protein shuttles the methylamine group of glycine from the P protein to the T protein. The sequence is that of Glycine cleavage system H protein from Burkholderia ambifaria (strain MC40-6).